A 118-amino-acid chain; its full sequence is Large ribosomal subunit protein bL21c (118 aa).

It belongs to the bacterial ribosomal protein bL21 family. In terms of assembly, part of the 50S ribosomal subunit.

It localises to the plastid. The protein resides in the chloroplast. In terms of biological role, this protein binds to 23S rRNA. This chain is Large ribosomal subunit protein bL21c, found in Zygnema circumcarinatum (Green alga).